We begin with the raw amino-acid sequence, 174 residues long: 3-hydroxyanthranilate 3,4-dioxygenase (174 aa).

Residue Arg-47 coordinates O2. Fe cation-binding residues include His-51, Glu-57, and His-95. Glu-57 contacts substrate. Residues Arg-99 and Glu-110 each coordinate substrate. Residues Cys-125, Cys-128, Cys-162, and Cys-165 each coordinate Fe cation.

It belongs to the 3-HAO family. In terms of assembly, homodimer. Fe(2+) is required as a cofactor.

The enzyme catalyses 3-hydroxyanthranilate + O2 = (2Z,4Z)-2-amino-3-carboxymuconate 6-semialdehyde. It functions in the pathway cofactor biosynthesis; NAD(+) biosynthesis; quinolinate from L-kynurenine: step 3/3. Its function is as follows. Catalyzes the oxidative ring opening of 3-hydroxyanthranilate to 2-amino-3-carboxymuconate semialdehyde, which spontaneously cyclizes to quinolinate. The sequence is that of 3-hydroxyanthranilate 3,4-dioxygenase from Paraburkholderia phytofirmans (strain DSM 17436 / LMG 22146 / PsJN) (Burkholderia phytofirmans).